Reading from the N-terminus, the 137-residue chain is Large ribosomal subunit protein uL16 (137 aa).

Residues 1-22 (MLQPKRTKFRKQQKGRNRGLAH) are disordered.

The protein belongs to the universal ribosomal protein uL16 family. In terms of assembly, part of the 50S ribosomal subunit.

Binds 23S rRNA and is also seen to make contacts with the A and possibly P site tRNAs. The chain is Large ribosomal subunit protein uL16 from Saccharophagus degradans (strain 2-40 / ATCC 43961 / DSM 17024).